We begin with the raw amino-acid sequence, 533 residues long: Lymphocyte cytosolic protein 2 (533 aa).

Residues 12-78 form the SAM domain; that stretch reads VLAWNSDNLA…SQDINKNEER (67 aa). Residue Tyr23 is modified to Phosphotyrosine. Disordered regions lie at residues 78–359 and 374–419; these read RRSI…PLAH and SASL…TPLD. A compositionally biased stretch (acidic residues) spans 94–144; that stretch reads ETESHEEDDGGWSSFEDDYESPNDDDPDGEDDGDYESPNEEEQALVDDAAD. A compositionally biased stretch (polar residues) spans 151–172; the sequence is NNEEALQSSILPPNSFHNTNSM. Residues 186-201 show a composition bias toward pro residues; sequence PPVPPLRPKPALPPLP. Phosphoserine occurs at positions 207 and 210. Residues 340–354 are compositionally biased toward polar residues; sequence NTFPSRSVQPSSKNT. Residues Ser376 and Ser410 each carry the phosphoserine modification. Pro residues predominate over residues 400 to 411; the sequence is LPVPNRPQPPSP. An SH2 domain is found at 422 to 530; it reads WYVSYITRPE…RYQCTLTHAA (109 aa).

As to quaternary structure, interacts with SLA. Interacts with CBLB. Interacts with GRB2. Interacts with SHB. Interacts with PRAM1. Interacts (via SH2 domain) with CD6 (via tyrosine phosphorylated C-terminus). Interacts with FYB1 and the phosphorylated form of FYB2. Interacts with 14-3-3 adapter/YWHAZ; this phosphorylation leads to YWHAZ proteolytic degradation. Interacts with VAV1; this interaction plays a role in TCR-mediated cytokine production. Interacts with AGER; this interaction plays an important role in AGER-mediated pro-inflammatory responses and cytokine release. Phosphorylated after T-cell receptor activation by ZAP70, ITK and TXK, which leads to the up-regulation of Th1 preferred cytokine IL-2. SYK-dependent phosphorylation is required for recruitment of PI3K signaling components. In terms of tissue distribution, highly expressed in spleen, thymus, and peripheral blood leukocytes.

The protein localises to the cytoplasm. In terms of biological role, adapter protein primarily involved in signaling pathways within T-cells, as well as other immune cells such as platelets, mast cells, and natural killer (NK) cells. Plays a crucial role for transducing signal from the T-cell receptor (TCR) after antigen recognition leading to T-cell activation. Mechanistically, once phosphorylated by the kinase ZAP70, mediates interactions with the guanine-nucleotide exchange factor VAV1, the adapter protein NCK and the kinase ITK. In turn, stimulates the activation of PKC-theta/PRKCQ and NF-kappa-B transcriptional activity in response to CD3 and CD28 costimulation. Also plays an essential role in AGER-induced signaling pathways including p38 MAPK and ERK1/2 activation leading to cytokine release and pro-inflammatory responses. The chain is Lymphocyte cytosolic protein 2 (Lcp2) from Mus musculus (Mouse).